Reading from the N-terminus, the 1830-residue chain is Dedicator of cytokinesis protein 2 (1830 aa).

Positions 8-69 (DKERHGVAIY…PKSFIHIKEV (62 aa)) constitute an SH3 domain. Lys-304 is subject to N6-acetyllysine. In terms of domain architecture, C2 DOCK-type spans 423–607 (RNDIYITLLQ…DVFSISTLVC (185 aa)). Residues Ser-588 and Ser-593 each carry the phosphoserine modification. Position 738 is an N6-acetyllysine (Lys-738). An interaction with CRKL region spans residues 939 to 1476 (CMTAILNQMG…TSFVTAYKLP (538 aa)). The 412-residue stretch at 1211–1622 (YKDNNREEMY…VEKEYGVREM (412 aa)) folds into the DOCKER domain. Positions 1651-1665 (MNSDCSTPSKPTSES) are enriched in polar residues. The tract at residues 1651–1704 (MNSDCSTPSKPTSESFDLELASPKTPRVEQEEPISPGSTLPEVKLRRSKKRTKR) is disordered. Phosphoserine is present on residues Ser-1685, Ser-1706, Ser-1731, and Ser-1784.

It belongs to the DOCK family. In terms of assembly, homodimer. Interacts with RAC1 and RAC2. Interacts with CRKL and VAV. Interacts with CD3Z. As to expression, specifically expressed in hematopoietic cells. Highly expressed in peripheral blood leukocytes, and expressed at intermediate level in thymus and spleen. Expressed at very low level in the small intestine and colon.

Its subcellular location is the endomembrane system. It is found in the cytoplasm. It localises to the cytoskeleton. Functionally, involved in cytoskeletal rearrangements required for lymphocyte migration in response of chemokines. Activates RAC1 and RAC2, but not CDC42, by functioning as a guanine nucleotide exchange factor (GEF), which exchanges bound GDP for free GTP. May also participate in IL2 transcriptional activation via the activation of RAC2. The protein is Dedicator of cytokinesis protein 2 (DOCK2) of Homo sapiens (Human).